A 413-amino-acid chain; its full sequence is Aminopeptidase 2 (413 aa).

E250, E316, E340, H345, H378, and D380 together coordinate a divalent metal cation.

The protein belongs to the peptidase M29 family. In terms of assembly, homodimer. Requires Co(2+) as cofactor. It depends on Zn(2+) as a cofactor. The cofactor is Mg(2+).

Broad specificity metal-dependent exopeptidase, releasing all N-terminal amino acids. This is Aminopeptidase 2 from Geobacillus stearothermophilus (Bacillus stearothermophilus).